The sequence spans 160 residues: Phosphopantetheine adenylyltransferase (160 aa).

Substrate is bound at residue Thr-10. ATP is bound by residues 10-11 and His-18; that span reads TF. Residues Lys-42, Leu-74, and Arg-88 each contribute to the substrate site. Residues 89–91, Glu-99, and 124–130 each bind ATP; these read GLR and NSFISST.

This sequence belongs to the bacterial CoaD family. Homohexamer. Mg(2+) is required as a cofactor.

The protein resides in the cytoplasm. It catalyses the reaction (R)-4'-phosphopantetheine + ATP + H(+) = 3'-dephospho-CoA + diphosphate. Its pathway is cofactor biosynthesis; coenzyme A biosynthesis; CoA from (R)-pantothenate: step 4/5. In terms of biological role, reversibly transfers an adenylyl group from ATP to 4'-phosphopantetheine, yielding dephospho-CoA (dPCoA) and pyrophosphate. The polypeptide is Phosphopantetheine adenylyltransferase (Shewanella piezotolerans (strain WP3 / JCM 13877)).